The chain runs to 431 residues: Peptidase B (431 aa).

The Mn(2+) site is built by lysine 196 and aspartate 201. The active site involves lysine 208. Positions 219, 278, and 280 each coordinate Mn(2+). The active site involves arginine 282.

This sequence belongs to the peptidase M17 family. In terms of assembly, homohexamer. Mn(2+) is required as a cofactor.

The protein resides in the cytoplasm. The enzyme catalyses Release of an N-terminal amino acid, Xaa, from a peptide or arylamide. Xaa is preferably Glu or Asp but may be other amino acids, including Leu, Met, His, Cys and Gln.. Its function is as follows. Probably plays an important role in intracellular peptide degradation. In Serratia proteamaculans (strain 568), this protein is Peptidase B.